A 707-amino-acid polypeptide reads, in one-letter code: MTNTLQFKEFSSFVNISFWHELSNKKLDELKLSEESIPLNGHYTFSPSQQLDPFLCLEFNAFLRNNVTNSTENQYVLPPRSYLSHGTLYNYNTVDDFKQSPKIKLFNDASKRIWNDINNGNIDKDTSLLNRFILLTYADIKNHQFYYMFGIPALLPSQPIQQFTEKPESINIESLKSFSNQILPQYFCLKQQQQESSTTTTTSFELIGSIEEKGNQYLNECLENDLIPLVGFCDPCSLPLNPGWPLRNFLIYLSIKYPMLKKIKVLCYRGNGSTSNSILLSLELPSMGEQLIKKQQEEDAGEWSGKSVGWEKDSNGKIAPRFVSLASTMDPLKLAEQSVDLNLKLMRWRVMPSLELEKIKTTSCLLLGSGTLGCNVARSLMSWGVRNITFVDSSKVSYSNPVRQSLFTFADCSPKAKEKSIAAADALKKIFPAINANAHVFSIPMPGHSVPQSEYQSIRNTIELLENLIKQHDVIYLLTDSRESRWLPTMLSRAHGKLCINAALGFDSYLVIRHGIKDQCQNELNPSISSKLGYQGSDLGCYFCNDVIAPTDTLKDRTLDQMCTVTRPGLSMMASSIAVELLISTIHHPYGGRAKGETETDVYVQGSTPLGIIPHQLRGFISHYQTLPLFSNPYKHCTACSDYIIDEYNSKGFDFIINVMNDSSCLTKICGIDDLKNTEVNIDWDIDISDDDDDNNNNNNKEKNDDF.

A GXGXXG motif motif is present at residues 368 to 373 (GSGTLG). Catalysis depends on Cys-563, which acts as the Glycyl thioester intermediate. A compositionally biased stretch (acidic residues) spans 686 to 695 (IDISDDDDDN). The segment at 686–707 (IDISDDDDDNNNNNNKEKNDDF) is disordered.

The protein belongs to the ATG7 family. Homodimer. Interacts with atg8 through a thioester bond between Cys-563 and the C-terminal 'Gly-120' of atg8 and with ATG12 through a thioester bond between Cys-563 and the C-terminal 'Gly-124' of atg12.

It is found in the cytoplasm. Its subcellular location is the preautophagosomal structure. Functionally, E1-like activating enzyme involved in the 2 ubiquitin-like systems required for autophagy. Activates atg12 for its conjugation with atg5 and atg8 for its conjugation with phosphatidylethanolamine. Both systems are needed for the atg8 association to autophagosomes membranes. Required for normal survival when exposed to pathogenic bacteria S.typhimurium by promoting autophagic degradation of intracellular S.typhimurium. The polypeptide is Ubiquitin-like modifier-activating enzyme atg7 (atg7) (Dictyostelium discoideum (Social amoeba)).